The following is a 298-amino-acid chain: Quinolinate synthase (298 aa).

Iminosuccinate contacts are provided by His-19 and Ser-36. A [4Fe-4S] cluster-binding site is contributed by Cys-81. Iminosuccinate-binding positions include 107–109 (YVN) and Ser-124. Cys-168 contacts [4Fe-4S] cluster. Iminosuccinate is bound by residues 193–195 (HPE) and Thr-210. Cys-254 contacts [4Fe-4S] cluster.

This sequence belongs to the quinolinate synthase family. Type 2 subfamily. The cofactor is [4Fe-4S] cluster.

The protein resides in the cytoplasm. The enzyme catalyses iminosuccinate + dihydroxyacetone phosphate = quinolinate + phosphate + 2 H2O + H(+). The protein operates within cofactor biosynthesis; NAD(+) biosynthesis; quinolinate from iminoaspartate: step 1/1. Functionally, catalyzes the condensation of iminoaspartate with dihydroxyacetone phosphate to form quinolinate. The sequence is that of Quinolinate synthase from Thermotoga sp. (strain RQ2).